A 309-amino-acid chain; its full sequence is MSKKIAVIGECMIELSEKGADVKRGFGGDTLNTSVYIARQVDPAALTVHYVTALGTDSFSQQMLDAWHGENVDTSLTQRMENRLPGLYYIETDSTGERTFYYWRNEAAAKFWLESEQSAAICEELANFDYLYLSGISLAILSPTSREKLLSLLRECRANGGKVIFDNNYRPRLWASKEETQQVYQQMLECTDIAFLTLDDEDALWGQQPVEDVIARTHNAGVKEVVVKRGADSCLVSIAGEGLVDVPAVKLPKEKVIDTTAAGDSFSAGYLAVRLTGGSAENAAKRGHLTASTVIQYRGAIIPREAMPA.

Residues 28–32 (GDTLN), Tyr88, 102–104 (YWR), and Arg170 each bind substrate. ATP is bound by residues 168-170 (NYR), 228-233 (KRGADS), and 261-264 (AAGD). Position 264 (Asp264) interacts with substrate. Asp264 serves as the catalytic Proton acceptor.

Belongs to the carbohydrate kinase pfkB family.

It catalyses the reaction 2-dehydro-3-deoxy-D-gluconate + ATP = 2-dehydro-3-deoxy-6-phospho-D-gluconate + ADP + H(+). It functions in the pathway carbohydrate acid metabolism; 2-dehydro-3-deoxy-D-gluconate degradation; D-glyceraldehyde 3-phosphate and pyruvate from 2-dehydro-3-deoxy-D-gluconate: step 1/2. Functionally, catalyzes the phosphorylation of 2-keto-3-deoxygluconate (KDG) to produce 2-keto-3-deoxy-6-phosphogluconate (KDPG). This is 2-dehydro-3-deoxygluconokinase (kdgK) from Escherichia coli (strain ATCC 9637 / CCM 2024 / DSM 1116 / LMG 11080 / NBRC 13500 / NCIMB 8666 / NRRL B-766 / W).